An 877-amino-acid chain; its full sequence is Protein P (877 aa).

The segment at 1–183 (MHPFSQLFRN…GKPYSWGHRQ (183 aa)) is terminal protein domain (TP). Residues 184-382 (LEQHNGQQHE…YCLHHIVSSL (199 aa)) are spacer. Residues 185–198 (EQHNGQQHESHLQS) are compositionally biased toward basic and acidic residues. A disordered region spans residues 185–347 (EQHNGQQHES…PSSSGLCGGT (163 aa)). The segment covering 233 to 242 (FGESQKSART) has biased composition (polar residues). Residues 267 to 281 (QQGSSQVSSPRSKSS) are compositionally biased toward low complexity. 2 stretches are compositionally biased toward polar residues: residues 282 to 302 (NFRN…PTWY) and 338 to 347 (PSSSGLCGGT). The interval 383–723 (EDWGPCTISG…YAELWPVARQ (341 aa)) is polymerase/reverse transcriptase domain (RT). The Reverse transcriptase domain occupies 393 to 634 (DVTIRSPRTP…HHLHFMGYVI (242 aa)). Asp465, Asp585, and Asp586 together coordinate Mg(2+).

It belongs to the hepadnaviridae P protein family.

The catalysed reaction is DNA(n) + a 2'-deoxyribonucleoside 5'-triphosphate = DNA(n+1) + diphosphate. It carries out the reaction Endonucleolytic cleavage to 5'-phosphomonoester.. Its activity is regulated as follows. Activated by host HSP70 and HSP40 in vitro to be able to bind the epsilon loop of the pgRNA. Because deletion of the RNase H region renders the protein partly chaperone-independent, the chaperones may be needed indirectly to relieve occlusion of the RNA-binding site by this domain. Inhibited by several reverse-transcriptase inhibitors: Lamivudine, Adefovir and Entecavir. In terms of biological role, multifunctional enzyme that converts the viral RNA genome into dsDNA in viral cytoplasmic capsids. This enzyme displays a DNA polymerase activity that can copy either DNA or RNA templates, and a ribonuclease H (RNase H) activity that cleaves the RNA strand of RNA-DNA heteroduplexes in a partially processive 3'- to 5'-endonucleasic mode. Neo-synthesized pregenomic RNA (pgRNA) are encapsidated together with the P protein, and reverse-transcribed inside the nucleocapsid. Initiation of reverse-transcription occurs first by binding the epsilon loop on the pgRNA genome, and is initiated by protein priming, thereby the 5'-end of (-)DNA is covalently linked to P protein. Partial (+)DNA is synthesized from the (-)DNA template and generates the relaxed circular DNA (RC-DNA) genome. After budding and infection, the RC-DNA migrates in the nucleus, and is converted into a plasmid-like covalently closed circular DNA (cccDNA). The activity of P protein does not seem to be necessary for cccDNA generation, and is presumably released from (+)DNA by host nuclear DNA repair machinery. This chain is Protein P, found in Arctic squirrel hepatitis virus (ASHV).